The chain runs to 240 residues: MKITILSLFPSIITPFFENSIMKKVVDKGIISYEVISIRDFSKDKHKRCDDVPYGGGAGMVLKVQPIVDALEYVNANSKTTIFVSPSGLKYTQKLAYDLSKKDELVIICGRYEGLDQRVIDLYVDLEISVGDYVLSSGEVAALVIIDSVYRLLDGVINPNSLCEESFSFECGLLEYPHYTRPYEFRNLKVPDVLLSGHHEEIKKWRLVKSVEKTKKNRFDLYLKYLEMRGEKNDGFDKKN.

Residues glycine 110 and 130 to 135 contribute to the S-adenosyl-L-methionine site; that span reads VGDYVL.

This sequence belongs to the RNA methyltransferase TrmD family. Homodimer.

The protein localises to the cytoplasm. The catalysed reaction is guanosine(37) in tRNA + S-adenosyl-L-methionine = N(1)-methylguanosine(37) in tRNA + S-adenosyl-L-homocysteine + H(+). Functionally, specifically methylates guanosine-37 in various tRNAs. This is tRNA (guanine-N(1)-)-methyltransferase from Borrelia recurrentis (strain A1).